A 681-amino-acid polypeptide reads, in one-letter code: DNA ligase (681 aa).

NAD(+)-binding positions include 35-39, 84-85, and glutamate 121; these read DAEYD and SI. Lysine 123 acts as the N6-AMP-lysine intermediate in catalysis. Residues arginine 144, glutamate 180, lysine 300, and lysine 324 each coordinate NAD(+). Positions 418, 421, 436, and 442 each coordinate Zn(2+). In terms of domain architecture, BRCT spans 601 to 681; it reads AADGPASGKT…GLRRLLEQPA (81 aa).

It belongs to the NAD-dependent DNA ligase family. LigA subfamily. It depends on Mg(2+) as a cofactor. The cofactor is Mn(2+).

The catalysed reaction is NAD(+) + (deoxyribonucleotide)n-3'-hydroxyl + 5'-phospho-(deoxyribonucleotide)m = (deoxyribonucleotide)n+m + AMP + beta-nicotinamide D-nucleotide.. DNA ligase that catalyzes the formation of phosphodiester linkages between 5'-phosphoryl and 3'-hydroxyl groups in double-stranded DNA using NAD as a coenzyme and as the energy source for the reaction. It is essential for DNA replication and repair of damaged DNA. This Aromatoleum aromaticum (strain DSM 19018 / LMG 30748 / EbN1) (Azoarcus sp. (strain EbN1)) protein is DNA ligase.